Reading from the N-terminus, the 245-residue chain is MMDPNSTSEDVKFTPDPYQVPFVQAFDQATRVYQDLGGPSQAPLPCVLWPVLPEPLPQGQLTAYHVSAAPTGSWFPAPQPAPENAYQAYAAPQLFPVSDITQNQQTNQAGGEAPQPGDNSTVQPAAAVVFACPGANQGQQLADIGAPQPAPAAAPARRTRKPLQPESLEECDSELDIKRYKNRVASRKCRAKFKHLLQHYREVASAKSSENDRLRLLLKQMCPSLDVDSIIPRTPDVLHEDLLNF.

The segment at 1 to 167 (MMDPNSTSED…RTRKPLQPES (167 aa)) is transactivation. Phosphothreonine is present on residues T14 and T159. The interval 140-167 (QLADIGAPQPAPAAAPARRTRKPLQPES) is disordered. Positions 157–194 (RRTRKPLQPESLEECDSELDIKRYKNRVASRKCRAKFK) match the Bipartite nuclear localization signal motif. S167, S173, and S186 each carry phosphoserine. The basic motif stretch occupies residues 178–195 (KRYKNRVASRKCRAKFKH). A bZIP domain is found at 178–228 (KRYKNRVASRKCRAKFKHLLQHYREVASAKSSENDRLRLLLKQMCPSLDVD). Residues 196-228 (LLQHYREVASAKSSENDRLRLLLKQMCPSLDVD) are leucine-zipper. Residues 229–245 (SIIPRTPDVLHEDLLNF) form an accessory activation domain region.

The protein belongs to the bZIP family. Homodimer. Interacts (via b-ZIP domain) with the DNA polymerase processivity factor BMRF1 (via N-terminus); this interaction may inhibit BZLF1-induced transcription of the BMRF1 promoter. Interacts with human UBN1, CRTC2 and RACK1. Interacts (via N-terminus) with human PAX5 (via N-terminus); this interaction inhibits BZLF1-mediated lytic viral reactivation. Interacts (via leucine-zipper domain) with host CEBPA; this interaction induces G1 host cell cycle arrest. Interacts (via C-terminus) with host TP53BP1 (via C-terminus); this interaction is involved in the activation of the viral lytic cycle. Interacts with host chromatin-remodeling ATPase INO80; this interaction participates to the activation of early lytic viral genes by BZLF1. Interacts with host regulator of chromatin SMARCA5/hSNF2H; this interaction participates to the activation of early lytic viral genes by BZLF1. Interacts with host PLSCR1/Phospholipid scramblase 1; this interaction negatively regulates the transcriptional regulatory activity of BZLF1 by preventing the formation of the BZLF1-CBP complex.

It is found in the host nucleus. Functionally, transcription factor that acts as a molecular switch to induce the transition from the latent to the lytic or productive phase of the virus cycle. Mediates the switch from the latent to the lytic cycle of infection in cells containing a highly methylated viral genome. Probably binds to silenced chromatin and recruits host chromatin-remodeling enzymes. Regulates this switch by binding to 2 types of ZEBRA response elements (ZREs): the CpG-free AP-1 like elements (latency) and the methylated CpG-containing elements (lytic replication). Activates preferentially the methylated forms of the viral lytic R (BRLF1) and Na (BRRF1) gene promoters, the latters being the first genes activated during Z-mediated reactivation in latently infected cells. BZLF1 and BRLF1 act together to trigger lytic replication. Also binds the lytic origin of replication, oriLyt. Induces G1 cell cycle arrest by stabilizing the host CCAAT/enhancer binding protein CEBPA. This function is important because the lytic cycle preferentially takes place in host cells arrested in G1. This is Lytic switch protein BZLF1 from Epstein-Barr virus (strain AG876) (HHV-4).